The following is a 134-amino-acid chain: ATP synthase epsilon chain (134 aa).

Belongs to the ATPase epsilon chain family. F-type ATPases have 2 components, CF(1) - the catalytic core - and CF(0) - the membrane proton channel. CF(1) has five subunits: alpha(3), beta(3), gamma(1), delta(1), epsilon(1). CF(0) has three main subunits: a, b and c.

The protein resides in the cellular thylakoid membrane. In terms of biological role, produces ATP from ADP in the presence of a proton gradient across the membrane. This chain is ATP synthase epsilon chain, found in Prochlorococcus marinus (strain AS9601).